Here is a 436-residue protein sequence, read N- to C-terminus: GTPase Der (436 aa).

EngA-type G domains follow at residues 4–167 and 175–351; these read PVVA…PKDA and IKFS…DNHE. GTP contacts are provided by residues 10-17, 57-61, 119-122, 181-188, 229-233, and 294-297; these read GRPNVGKS, DTGGI, NKVD, DTAGI, and NKWD. The region spanning 352–436 is the KH-like domain; the sequence is QRISSAVLND…PIHIIERRRK (85 aa).

The protein belongs to the TRAFAC class TrmE-Era-EngA-EngB-Septin-like GTPase superfamily. EngA (Der) GTPase family. As to quaternary structure, associates with the 50S ribosomal subunit.

GTPase that plays an essential role in the late steps of ribosome biogenesis. The protein is GTPase Der of Ligilactobacillus salivarius (strain UCC118) (Lactobacillus salivarius).